The sequence spans 61 residues: Large ribosomal subunit protein bL32 (61 aa).

The protein belongs to the bacterial ribosomal protein bL32 family.

The chain is Large ribosomal subunit protein bL32 from Acidithiobacillus ferrooxidans (strain ATCC 23270 / DSM 14882 / CIP 104768 / NCIMB 8455) (Ferrobacillus ferrooxidans (strain ATCC 23270)).